The primary structure comprises 466 residues: 3-isopropylmalate dehydratase large subunit (466 aa).

The [4Fe-4S] cluster site is built by C347, C407, and C410.

This sequence belongs to the aconitase/IPM isomerase family. LeuC type 1 subfamily. In terms of assembly, heterodimer of LeuC and LeuD. The cofactor is [4Fe-4S] cluster.

It carries out the reaction (2R,3S)-3-isopropylmalate = (2S)-2-isopropylmalate. It functions in the pathway amino-acid biosynthesis; L-leucine biosynthesis; L-leucine from 3-methyl-2-oxobutanoate: step 2/4. Its function is as follows. Catalyzes the isomerization between 2-isopropylmalate and 3-isopropylmalate, via the formation of 2-isopropylmaleate. The protein is 3-isopropylmalate dehydratase large subunit of Shigella dysenteriae serotype 1 (strain Sd197).